The following is a 110-amino-acid chain: Small ribosomal subunit protein bS16 (110 aa).

Residues 87–110 form a disordered region; the sequence is ARQNPIKAVPRKERKAQAEAAAKG.

This sequence belongs to the bacterial ribosomal protein bS16 family.

This Bradyrhizobium sp. (strain BTAi1 / ATCC BAA-1182) protein is Small ribosomal subunit protein bS16.